The following is a 500-amino-acid chain: Prostacyclin synthase (500 aa).

The helical transmembrane segment at Met-1–Ser-20 threads the bilayer. Residues Arg-106, Leu-112, Asn-287, Thr-358 to Arg-359, and Arg-382 each bind substrate. Cys-441 provides a ligand contact to heme.

The protein belongs to the cytochrome P450 family. Requires heme as cofactor. In terms of tissue distribution, widely expressed; particularly abundant in ovary, heart, skeletal muscle, lung and prostate.

The protein resides in the endoplasmic reticulum membrane. The catalysed reaction is prostaglandin H2 = prostaglandin I2. It carries out the reaction a hydroperoxyeicosatetraenoate = an oxoeicosatetraenoate + H2O. It catalyses the reaction (15S)-hydroperoxy-(5Z,8Z,11Z,13E)-eicosatetraenoate = 15-oxo-(5Z,8Z,11Z,13E)-eicosatetraenoate + H2O. The enzyme catalyses (15S)-hydroperoxy-(5Z,8Z,11Z,13E)-eicosatetraenoate + AH2 = (15S)-hydroxy-(5Z,8Z,11Z,13E)-eicosatetraenoate + A + H2O. Its function is as follows. Catalyzes the biosynthesis and metabolism of eicosanoids. Catalyzes the isomerization of prostaglandin H2 to prostacyclin (= prostaglandin I2), a potent mediator of vasodilation and inhibitor of platelet aggregation. Additionally, displays dehydratase activity, toward hydroperoxyeicosatetraenoates (HPETEs), especially toward (15S)-hydroperoxy-(5Z,8Z,11Z,13E)-eicosatetraenoate (15(S)-HPETE). In Homo sapiens (Human), this protein is Prostacyclin synthase (PTGIS).